We begin with the raw amino-acid sequence, 241 residues long: MLALSLLSIVSIASAAGVTAIPEGDNPYTIFPSVAKTASINGFADRIYDQLPECAKECVKQSTSSTPCPYWDTGCLCVMPQFAGAVGNCVAKNCKGKEVGSVESLATSICSSAGVWEPYWMIPSSVSDALAKAADAAAETTAESTTAESTAAETTKAEETSAKETTAAETSKAAESSAPAETSKAEETSKAAETTKAEESSVAQSSSSAADVASVSVEAANAGNMPAVAIGGVIAAVAALF.

The signal sequence occupies residues 1 to 20; it reads MLALSLLSIVSIASAAGVTA. One can recognise a CFEM domain in the interval 26–137; sequence NPYTIFPSVA…DALAKAADAA (112 aa). 4 disulfides stabilise this stretch: C54/C94, C58/C89, C68/C75, and C77/C110. D72 provides a ligand contact to heme. Composition is skewed to low complexity over residues 140-154 and 163-182; these read TTAE…AAET and KETT…PAET. The tract at residues 140-210 is disordered; it reads TTAESTTAES…SVAQSSSSAA (71 aa). Residues 183 to 199 are compositionally biased toward basic and acidic residues; that stretch reads SKAEETSKAAETTKAEE. The span at 200-210 shows a compositional bias: low complexity; it reads SSVAQSSSSAA. Residue N221 is the site of GPI-anchor amidated asparagine attachment. Positions 222-241 are cleaved as a propeptide — removed in mature form; the sequence is AGNMPAVAIGGVIAAVAALF.

Belongs to the RBT5 family. In terms of assembly, interacts with PGA7. Post-translationally, the GPI-anchor is attached to the protein in the endoplasmic reticulum and serves to target the protein to the cell surface. There, the glucosamine-inositol phospholipid moiety is cleaved off and the GPI-modified mannoprotein is covalently attached via its lipidless GPI glycan remnant to the 1,6-beta-glucan of the outer cell wall layer. Mannosylated.

Its subcellular location is the secreted. It localises to the cell wall. The protein localises to the cell membrane. GPI-linked hyphal surface heme-binding protein involved in heme-iron utilization. Heme transfer occurs between PGA7, RBT5 and CSA2 supporting a model in which the 3 CFEM proteins cooperate in a heme-acquisition system and form a cross-cell wall heme-transfer cascade. The ability to acquire iron from host tissues is a major virulence factor of pathogenic microorganisms. Required for biofilm formation. This chain is GPI-anchored hemophore RBT5, found in Candida albicans (strain SC5314 / ATCC MYA-2876) (Yeast).